The following is a 327-amino-acid chain: Phenylalanine--tRNA ligase alpha subunit (327 aa).

Mg(2+) is bound at residue Glu-252.

The protein belongs to the class-II aminoacyl-tRNA synthetase family. Phe-tRNA synthetase alpha subunit type 1 subfamily. In terms of assembly, tetramer of two alpha and two beta subunits. The cofactor is Mg(2+).

It is found in the cytoplasm. It catalyses the reaction tRNA(Phe) + L-phenylalanine + ATP = L-phenylalanyl-tRNA(Phe) + AMP + diphosphate + H(+). The protein is Phenylalanine--tRNA ligase alpha subunit of Vibrio vulnificus (strain CMCP6).